The primary structure comprises 368 residues: Alanine racemase (368 aa).

K40 functions as the Proton acceptor; specific for D-alanine in the catalytic mechanism. N6-(pyridoxal phosphate)lysine is present on K40. Position 134 (R134) interacts with substrate. Residue Y263 is the Proton acceptor; specific for L-alanine of the active site. M310 contacts substrate.

Belongs to the alanine racemase family. Requires pyridoxal 5'-phosphate as cofactor.

The catalysed reaction is L-alanine = D-alanine. Its pathway is amino-acid biosynthesis; D-alanine biosynthesis; D-alanine from L-alanine: step 1/1. Catalyzes the interconversion of L-alanine and D-alanine. May also act on other amino acids. The chain is Alanine racemase (alr) from Listeria monocytogenes serovar 1/2a (strain ATCC BAA-679 / EGD-e).